The chain runs to 266 residues: 22 kDa alpha-zein 8 (266 aa).

The N-terminal stretch at 1–21 (MATKILALLALLALFVSATNA) is a signal peptide.

It belongs to the zein family.

Its function is as follows. Zeins are major seed storage proteins. The sequence is that of 22 kDa alpha-zein 8 from Zea mays (Maize).